We begin with the raw amino-acid sequence, 421 residues long: 3-isopropylmalate dehydratase large subunit (421 aa).

3 residues coordinate [4Fe-4S] cluster: Cys302, Cys362, and Cys365.

This sequence belongs to the aconitase/IPM isomerase family. LeuC type 2 subfamily. Heterodimer of LeuC and LeuD. Requires [4Fe-4S] cluster as cofactor.

It catalyses the reaction (2R,3S)-3-isopropylmalate = (2S)-2-isopropylmalate. The protein operates within amino-acid biosynthesis; L-leucine biosynthesis; L-leucine from 3-methyl-2-oxobutanoate: step 2/4. Functionally, catalyzes the isomerization between 2-isopropylmalate and 3-isopropylmalate, via the formation of 2-isopropylmaleate. This chain is 3-isopropylmalate dehydratase large subunit, found in Nitratiruptor sp. (strain SB155-2).